The sequence spans 1064 residues: WD repeat-containing protein on Y chromosome (1064 aa).

WD repeat units follow at residues 150–194, 317–356, 360–399, 450–489, 502–541, 589–629, 742–781, and 825–864; these read EEVT…IRTA, RIPL…EPSA, GHNG…LLQT, THAA…RKII, IIDI…VVRN, FHTD…RRYS, KTGD…VPAS, and GHLK…LGTL. Residues 1022–1044 are disordered; it reads SSLNIKQPTRRRSGKTHDPRNIR.

The protein is WD repeat-containing protein on Y chromosome of Drosophila ananassae (Fruit fly).